The chain runs to 341 residues: RNA 3'-terminal phosphate cyclase (341 aa).

Residues Gln102 and 283–287 (HLADQ) contribute to the ATP site. The Tele-AMP-histidine intermediate role is filled by His308.

Belongs to the RNA 3'-terminal cyclase family. Type 1 subfamily.

It is found in the cytoplasm. The enzyme catalyses a 3'-end 3'-phospho-ribonucleotide-RNA + ATP = a 3'-end 2',3'-cyclophospho-ribonucleotide-RNA + AMP + diphosphate. Its function is as follows. Catalyzes the conversion of 3'-phosphate to a 2',3'-cyclic phosphodiester at the end of RNA. The mechanism of action of the enzyme occurs in 3 steps: (A) adenylation of the enzyme by ATP; (B) transfer of adenylate to an RNA-N3'P to produce RNA-N3'PP5'A; (C) and attack of the adjacent 2'-hydroxyl on the 3'-phosphorus in the diester linkage to produce the cyclic end product. The biological role of this enzyme is unknown but it is likely to function in some aspects of cellular RNA processing. The protein is RNA 3'-terminal phosphate cyclase of Ectopseudomonas mendocina (strain ymp) (Pseudomonas mendocina).